Reading from the N-terminus, the 473-residue chain is Photosystem II CP43 reaction center protein (473 aa).

A propeptide spanning residues 1-14 (MKTLYSLRRFYHVE) is cleaved from the precursor. Thr15 is subject to N-acetylthreonine. Phosphothreonine is present on Thr15. The next 5 helical transmembrane spans lie at 69-93 (LFEV…PHLA), 134-155 (LLGP…KDRN), 178-200 (KAFY…RKIT), 255-275 (KPFA…LSYS), and 291-312 (WFNN…ASQA). Glu367 is a [CaMn4O5] cluster binding site. Residues 447 to 471 (RARAAAAGFEKGIDRDFEPVLSMTP) form a helical membrane-spanning segment.

This sequence belongs to the PsbB/PsbC family. PsbC subfamily. PSII is composed of 1 copy each of membrane proteins PsbA, PsbB, PsbC, PsbD, PsbE, PsbF, PsbH, PsbI, PsbJ, PsbK, PsbL, PsbM, PsbT, PsbX, PsbY, PsbZ, Psb30/Ycf12, at least 3 peripheral proteins of the oxygen-evolving complex and a large number of cofactors. It forms dimeric complexes. Binds multiple chlorophylls and provides some of the ligands for the Ca-4Mn-5O cluster of the oxygen-evolving complex. It may also provide a ligand for a Cl- that is required for oxygen evolution. PSII binds additional chlorophylls, carotenoids and specific lipids. is required as a cofactor.

The protein localises to the plastid. It is found in the chloroplast thylakoid membrane. Functionally, one of the components of the core complex of photosystem II (PSII). It binds chlorophyll and helps catalyze the primary light-induced photochemical processes of PSII. PSII is a light-driven water:plastoquinone oxidoreductase, using light energy to abstract electrons from H(2)O, generating O(2) and a proton gradient subsequently used for ATP formation. The protein is Photosystem II CP43 reaction center protein of Pisum sativum (Garden pea).